The sequence spans 154 residues: Superoxide dismutase [Cu-Zn] (154 aa).

Residues histidine 47, histidine 49, and histidine 64 each coordinate Cu cation. Cysteine 58 and cysteine 147 are disulfide-bonded. Zn(2+) contacts are provided by histidine 64, histidine 72, histidine 81, and aspartate 84. Histidine 121 contacts Cu cation.

The protein belongs to the Cu-Zn superoxide dismutase family. As to quaternary structure, homodimer. Requires Cu cation as cofactor. Zn(2+) serves as cofactor.

The protein resides in the cytoplasm. The enzyme catalyses 2 superoxide + 2 H(+) = H2O2 + O2. Its function is as follows. Destroys radicals which are normally produced within the cells and which are toxic to biological systems. The protein is Superoxide dismutase [Cu-Zn] (SODCC) of Pinus sylvestris (Scotch pine).